A 301-amino-acid chain; its full sequence is F-box protein At4g02733 (301 aa).

The F-box domain maps to 91–146 (NSISWFLPSELTVKVFSMVDTKSLMQASACCTMFNNCAMDPLCYFHIDLTKAFKHV).

This is F-box protein At4g02733 from Arabidopsis thaliana (Mouse-ear cress).